We begin with the raw amino-acid sequence, 456 residues long: 3-isopropylmalate dehydratase large subunit (456 aa).

[4Fe-4S] cluster is bound by residues C336, C396, and C399.

This sequence belongs to the aconitase/IPM isomerase family. LeuC type 1 subfamily. In terms of assembly, heterodimer of LeuC and LeuD. The cofactor is [4Fe-4S] cluster.

The catalysed reaction is (2R,3S)-3-isopropylmalate = (2S)-2-isopropylmalate. The protein operates within amino-acid biosynthesis; L-leucine biosynthesis; L-leucine from 3-methyl-2-oxobutanoate: step 2/4. Functionally, catalyzes the isomerization between 2-isopropylmalate and 3-isopropylmalate, via the formation of 2-isopropylmaleate. This is 3-isopropylmalate dehydratase large subunit from Staphylococcus epidermidis (strain ATCC 12228 / FDA PCI 1200).